We begin with the raw amino-acid sequence, 329 residues long: Probable ABC transporter permease protein MG188 (329 aa).

The next 6 membrane-spanning stretches (helical) occupy residues 30–50 (FLLF…PFFL), 96–116 (LISL…IVFV), 128–148 (VFFL…VYIF), 176–196 (ALWA…VLII), 234–254 (LIFL…LALF), and 283–303 (NLAG…GLVL). The region spanning 88–303 (LRNSFLYSLI…VLGVCYGLVL (216 aa)) is the ABC transmembrane type-1 domain.

This sequence belongs to the binding-protein-dependent transport system permease family. MalFG subfamily.

It is found in the cell membrane. Functionally, probably part of a binding-protein-dependent transport system. Probably responsible for the translocation of the substrate across the membrane. This chain is Probable ABC transporter permease protein MG188, found in Mycoplasma genitalium (strain ATCC 33530 / DSM 19775 / NCTC 10195 / G37) (Mycoplasmoides genitalium).